The chain runs to 485 residues: Glutamyl-tRNA(Gln) amidotransferase subunit A (485 aa).

Residues Lys80 and Ser155 each act as charge relay system in the active site. Ser179 serves as the catalytic Acyl-ester intermediate.

This sequence belongs to the amidase family. GatA subfamily. As to quaternary structure, heterotrimer of A, B and C subunits.

It catalyses the reaction L-glutamyl-tRNA(Gln) + L-glutamine + ATP + H2O = L-glutaminyl-tRNA(Gln) + L-glutamate + ADP + phosphate + H(+). Functionally, allows the formation of correctly charged Gln-tRNA(Gln) through the transamidation of misacylated Glu-tRNA(Gln) in organisms which lack glutaminyl-tRNA synthetase. The reaction takes place in the presence of glutamine and ATP through an activated gamma-phospho-Glu-tRNA(Gln). The chain is Glutamyl-tRNA(Gln) amidotransferase subunit A from Leptospira borgpetersenii serovar Hardjo-bovis (strain L550).